The chain runs to 260 residues: Glucosamine-6-phosphate deaminase (260 aa).

Catalysis depends on aspartate 67, which acts as the Proton acceptor; for enolization step. The active-site For ring-opening step is the aspartate 136. Residue histidine 138 is the Proton acceptor; for ring-opening step of the active site. Glutamate 143 serves as the catalytic For ring-opening step.

It belongs to the glucosamine/galactosamine-6-phosphate isomerase family. NagB subfamily.

The enzyme catalyses alpha-D-glucosamine 6-phosphate + H2O = beta-D-fructose 6-phosphate + NH4(+). Its pathway is amino-sugar metabolism; N-acetylneuraminate degradation; D-fructose 6-phosphate from N-acetylneuraminate: step 5/5. Its function is as follows. Catalyzes the reversible isomerization-deamination of glucosamine 6-phosphate (GlcN6P) to form fructose 6-phosphate (Fru6P) and ammonium ion. The chain is Glucosamine-6-phosphate deaminase from Arthrobacter sp. (strain FB24).